The primary structure comprises 288 residues: Phenazine biosynthesis-like domain-containing protein 1 (288 aa).

The active site involves E46.

It belongs to the PhzF family.

The protein is Phenazine biosynthesis-like domain-containing protein 1 (Pbld1) of Mus musculus (Mouse).